Here is a 1307-residue protein sequence, read N- to C-terminus: CRISPR-associated endonuclease Cas12a (1307 aa).

Positions 1–35 (MTQFEGFTNLYQVSKTLRFELIPQGKTLKHIQEQG) are WED-I (OBD-I). Positions 36–320 (FIEEDKARND…SDRNTLSFIL (285 aa)) are REC1 (helical-I). A crRNA-binding site is contributed by 47–51 (YKELK). Positions 74–106 (ENLSAAIDSYRKEKTEETRNALIEEQATYRNAI) form a coiled coil. CrRNA contacts are provided by residues 175 to 176 (NR) and 307 to 310 (KQIL). The interval 321 to 526 (EEFKSDEEVI…ARNYATKKPY (206 aa)) is WED-II (helical-II). A WED-II (OBD-I) region spans residues 527 to 598 (SVEKFKLNFQ…GFDKMYYDYF (72 aa)). The PAM-binding on target DNA DNA-binding region spans 599-607 (PDAAKMIPK). Positions 599–718 (PDAAKMIPKC…EYYAELNPLL (120 aa)) are PI (LHD). Residues 719-884 (YHISFQRIAE…ITLNYQAANS (166 aa)) are WED-III (OBD-III). Residue 752-761 (KGHHGKPNLH) participates in crRNA binding. Positions 780–783 (KLNG) form a DNA-binding region, target DNA. H800 functions as the For pre-crRNA processing in the catalytic mechanism. Position 806-808 (806-808 (MLN)) interacts with crRNA. Residues K809 and K860 each act as for pre-crRNA processing in the active site. The tract at residues 885–940 (PSKFNQRVNAYLKEHPETPIIGIDRGERNLIYITVIDSTGKILEQRSLNTIQQFDY) is ruvC-I. The active-site For DNase activity of RuvC domain is D908. Positions 941 to 957 (QKKLDNREKERVAARQA) are bridge helix. The segment at residues 951–968 (RVAARQAWSVVGTIKDLK) is a DNA-binding region (target DNA). Residues 958 to 1066 (WSVVGTIKDL…TQSGFLFYVP (109 aa)) are ruvC-II. Residue E993 is the For DNase activity of RuvC domain of the active site. The segment at residues 1051–1053 (SFA) is a DNA-binding region (target DNA). The tract at residues 1067–1262 (APYTSKIDPL…FQNPEWPMDA (196 aa)) is nuclease domain. The active-site For DNase activity of nuclease domain is the R1226. The active-site For DNase activity of RuvC domain is D1263. Residues 1263-1307 (DANGAYHIALKGQLLLNHLKESKDLKLQNGISNQDWLAYIQELRN) form a ruvC-III region.

It belongs to the CRISPR-associated endonuclease Cas12a family. In terms of assembly, monomer. Mg(2+) serves as cofactor.

The catalysed reaction is Endonucleolytic cleavage to 5'-phosphodinucleotide and 5'-phosphooligonucleotide end-products.. It catalyses the reaction RNA = a 5'-hydroxy-ribonucleotide + n nucleoside-2',3'-cyclophosphates.. Its function is as follows. CRISPR (clustered regularly interspaced short palindromic repeat), is an adaptive immune system that provides protection against mobile genetic elements (viruses, transposable elements and conjugative plasmids). CRISPR clusters contain sequences complementary to antecedent mobile elements and target invading nucleic acids. CRISPR clusters are transcribed and processed into CRISPR RNA (crRNA). Recognizes a short motif in the CRISPR repeat sequences (the 5' PAM or protospacer adjacent motif, TTTN in this organism) to help distinguish self versus nonself, as targets within the bacterial CRISPR locus do not have PAMs. Has dsDNA endonuclease activity, results in staggered 4-base 5' overhangs 19 and 22 bases downstream of the PAM on the non-targeted and targeted strand respectively. Non-target strand cleavage by the RuvC domain is probably a prerequisite of target strand cleavage by the Nuc domain. Protects E.coli against plasmids and bacteriophage M13mp18, phage T4 with hydroxymethyl or unmodified (but not glycosylated) cytosines and to a lesser extent against lambda and VpaE1 phage. In this CRISPR system correct processing of pre-crRNA requires only this protein and the CRISPR locus. This chain is CRISPR-associated endonuclease Cas12a, found in Acidaminococcus sp. (strain BV3L6).